Reading from the N-terminus, the 187-residue chain is GTP cyclohydrolase 1 (187 aa).

Positions 76, 79, and 148 each coordinate Zn(2+).

Belongs to the GTP cyclohydrolase I family. In terms of assembly, toroid-shaped homodecamer, composed of two pentamers of five dimers.

The enzyme catalyses GTP + H2O = 7,8-dihydroneopterin 3'-triphosphate + formate + H(+). The protein operates within cofactor biosynthesis; 7,8-dihydroneopterin triphosphate biosynthesis; 7,8-dihydroneopterin triphosphate from GTP: step 1/1. This chain is GTP cyclohydrolase 1, found in Streptococcus suis (strain 98HAH33).